The following is an 85-amino-acid chain: Small ribosomal subunit protein uS17 (85 aa).

The protein belongs to the universal ribosomal protein uS17 family. As to quaternary structure, part of the 30S ribosomal subunit.

One of the primary rRNA binding proteins, it binds specifically to the 5'-end of 16S ribosomal RNA. In Pasteurella multocida (strain Pm70), this protein is Small ribosomal subunit protein uS17.